A 366-amino-acid chain; its full sequence is tRNA/tmRNA (uracil-C(5))-methyltransferase (366 aa).

The S-adenosyl-L-methionine site is built by Gln-190, Tyr-218, Asn-223, Glu-239, and Asp-299. Cys-324 acts as the Nucleophile in catalysis. Catalysis depends on Glu-358, which acts as the Proton acceptor.

Belongs to the class I-like SAM-binding methyltransferase superfamily. RNA M5U methyltransferase family. TrmA subfamily.

The catalysed reaction is uridine(54) in tRNA + S-adenosyl-L-methionine = 5-methyluridine(54) in tRNA + S-adenosyl-L-homocysteine + H(+). It carries out the reaction uridine(341) in tmRNA + S-adenosyl-L-methionine = 5-methyluridine(341) in tmRNA + S-adenosyl-L-homocysteine + H(+). Its function is as follows. Dual-specificity methyltransferase that catalyzes the formation of 5-methyluridine at position 54 (m5U54) in all tRNAs, and that of position 341 (m5U341) in tmRNA (transfer-mRNA). In Citrobacter koseri (strain ATCC BAA-895 / CDC 4225-83 / SGSC4696), this protein is tRNA/tmRNA (uracil-C(5))-methyltransferase.